The primary structure comprises 122 residues: Pollen allergen Phl p 2 (122 aa).

An N-terminal signal peptide occupies residues 1 to 26 (MSMASSSSSSLLAMAVLAALFAGAWC). The region spanning 41–120 (KHLAVLVKYE…KYTIGATYAP (80 aa)) is the Expansin-like CBD domain.

It belongs to the expansin family. Expansin B subfamily. As to expression, pollen specific.

It localises to the secreted. The chain is Pollen allergen Phl p 2 (PHLPII) from Phleum pratense (Common timothy).